The chain runs to 96 residues: MEQAPEDQGPQREPYNEWTLELLEELKNEAVRHFPRIWLHSLGQYIYETYGDTWAGVEAIIRILQQLLFIHFRIGCRHSRIGITRQRRARNGASRS.

The tract at residues 1–42 is homooligomerization; the sequence is MEQAPEDQGPQREPYNEWTLELLEELKNEAVRHFPRIWLHSL. A phosphoserine; by host mark is found at Ser-79, Ser-94, and Ser-96.

The protein belongs to the HIV-1 VPR protein family. In terms of assembly, homooligomer, may form homodimer. Interacts with p6-gag region of the Pr55 Gag precursor protein through a (Leu-X-X)4 motif near the C-terminus of the P6gag protein. Interacts with host UNG. May interact with host RAD23A/HHR23A. Interacts with host VPRBP/DCAF1, leading to hijack the CUL4A-RBX1-DDB1-DCAF1/VPRBP complex, mediating ubiquitination of host proteins such as TERT and ZGPAT and arrest of the cell cycle in G2 phase. In terms of processing, phosphorylated on several residues by host. These phosphorylations regulate VPR activity for the nuclear import of the HIV-1 pre-integration complex.

The protein localises to the virion. It is found in the host nucleus. Its subcellular location is the host extracellular space. In terms of biological role, during virus replication, may deplete host UNG protein, and incude G2-M cell cycle arrest. Acts by targeting specific host proteins for degradation by the 26S proteasome, through association with the cellular CUL4A-DDB1 E3 ligase complex by direct interaction with host VPRPB/DCAF-1. Cell cycle arrest reportedly occurs within hours of infection and is not blocked by antiviral agents, suggesting that it is initiated by the VPR carried into the virion. Additionally, VPR induces apoptosis in a cell cycle dependent manner suggesting that these two effects are mechanistically linked. Detected in the serum and cerebrospinal fluid of AIDS patient, VPR may also induce cell death to bystander cells. Its function is as follows. During virus entry, plays a role in the transport of the viral pre-integration (PIC) complex to the host nucleus. This function is crucial for viral infection of non-dividing macrophages. May act directly at the nuclear pore complex, by binding nucleoporins phenylalanine-glycine (FG)-repeat regions. The polypeptide is Protein Vpr (Homo sapiens (Human)).